The primary structure comprises 730 residues: Translation initiation factor IF-2 (730 aa).

The segment at 48–151 (GNGNQKQGGS…NKAKPLPEKV (104 aa)) is disordered. 2 stretches are compositionally biased toward basic and acidic residues: residues 61-77 (EQQK…DHGQ) and 89-104 (NQHD…KGKA). The span at 110–123 (KPKHKGNKNKKQHQ) shows a compositional bias: basic residues. Over residues 137–148 (RQPEMNKAKPLP) the composition is skewed to basic and acidic residues. Residues 231–400 (ERPPVVTIMG…LLVAEVEELK (170 aa)) form the tr-type G domain. Residues 240–247 (GHVDHGKT) are G1. 240–247 (GHVDHGKT) provides a ligand contact to GTP. The tract at residues 265–269 (GITQH) is G2. Positions 286 to 289 (DTPG) are G3. GTP-binding positions include 286–290 (DTPGH) and 340–343 (NKMD). Residues 340-343 (NKMD) are G4. The tract at residues 376 to 378 (SAL) is G5.

Belongs to the TRAFAC class translation factor GTPase superfamily. Classic translation factor GTPase family. IF-2 subfamily.

The protein localises to the cytoplasm. Its function is as follows. One of the essential components for the initiation of protein synthesis. Protects formylmethionyl-tRNA from spontaneous hydrolysis and promotes its binding to the 30S ribosomal subunits. Also involved in the hydrolysis of GTP during the formation of the 70S ribosomal complex. In Halalkalibacterium halodurans (strain ATCC BAA-125 / DSM 18197 / FERM 7344 / JCM 9153 / C-125) (Bacillus halodurans), this protein is Translation initiation factor IF-2.